The sequence spans 193 residues: Acyl carrier protein phosphodiesterase (193 aa).

It belongs to the AcpH family.

The catalysed reaction is holo-[ACP] + H2O = apo-[ACP] + (R)-4'-phosphopantetheine + H(+). Its function is as follows. Converts holo-ACP to apo-ACP by hydrolytic cleavage of the phosphopantetheine prosthetic group from ACP. This is Acyl carrier protein phosphodiesterase from Salmonella newport (strain SL254).